We begin with the raw amino-acid sequence, 513 residues long: MQLNSTEISELIKQRIAQFNVVSEAHNEGTIVSVSDGVIRIHGLADCMQGEMISLPGNRYAIALNLERDSVGAVVMGPYADLAEGMKVKCTGRILEVPVGRGLLGRVVNTLGAPIDGKGPLDHDGFSAVEAIAPGVIERQSVDQPVQTGYKAVDSMIPIGRGQRELIIGDRQTGKTALAIDAIINQRDSGIKCIYVAIGQKASTISNVVRKLEEHGALANTIVVVATASESAALQYLAPYAGCAMGEYFRDRGEDALIIYDDLSKQAVAYRQISLLLRRPPGREAFPGDVFYLHSRLLERAARVNAEYVEAFTKGEVKGKNGSLTALPIIETQAGDVSAFVPTNVISITDGQIFLETNLFNAGIRPAVNPGISVSRVGGAAQTKIMKKLSGGIRTALAQYRELAAFSQFASDLDDATRKQLDHGQKVTELLKQKQYAPMSVAQQSLVLFAAERGYLADVELSKIGSFEAALLAYVDRDHAPLMQEINQTGGYNDEIEGKLKGILDSFKATQSW.

An ATP-binding site is contributed by 169–176 (GDRQTGKT).

Belongs to the ATPase alpha/beta chains family. F-type ATPases have 2 components, CF(1) - the catalytic core - and CF(0) - the membrane proton channel. CF(1) has five subunits: alpha(3), beta(3), gamma(1), delta(1), epsilon(1). CF(0) has three main subunits: a(1), b(2) and c(9-12). The alpha and beta chains form an alternating ring which encloses part of the gamma chain. CF(1) is attached to CF(0) by a central stalk formed by the gamma and epsilon chains, while a peripheral stalk is formed by the delta and b chains.

Its subcellular location is the cell inner membrane. The enzyme catalyses ATP + H2O + 4 H(+)(in) = ADP + phosphate + 5 H(+)(out). Its function is as follows. Produces ATP from ADP in the presence of a proton gradient across the membrane. The alpha chain is a regulatory subunit. This Shigella boydii serotype 18 (strain CDC 3083-94 / BS512) protein is ATP synthase subunit alpha.